Consider the following 1335-residue polypeptide: Membrane-associated phosphatidylinositol transfer protein 2 (1335 aa).

2 disordered regions span residues Glu32–Gly51 and Glu262–Glu341. Over residues Lys275–Gly286 the composition is skewed to polar residues. The span at Lys299–Arg319 shows a compositional bias: low complexity. Phosphoserine is present on residues Ser334, Ser338, Ser365, and Ser586. Positions His606–Tyr657 are disordered. Residues Gly609 to Gly618 are compositionally biased toward gly residues. A Phosphoserine modification is found at Ser630. Positions Gly639–Asp653 are enriched in basic and acidic residues. Phosphoserine is present on residues Ser686, Ser687, and Ser688. A DDHD domain is found at Phe701–Arg949. Position 814 is an omega-N-methylarginine (Arg814). Residues Ala861–Ser880 are disordered. At Ser1263 the chain carries Phosphoserine. The tract at residues Thr1282–Val1313 is disordered. The segment covering Gln1298 to Val1313 has biased composition (polar residues).

This sequence belongs to the PtdIns transfer protein family. PI transfer class IIA subfamily. In terms of assembly, interacts with CPNE4 (via VWFA domain). Interacts with PTK2B via its C-terminus. Detected in retina and in the dentate gyrus of the cerebellum.

The protein resides in the endomembrane system. The protein localises to the cytoplasm. It is found in the cytoskeleton. Catalyzes the transfer of phosphatidylinositol and phosphatidylcholine between membranes (in vitro). Binds calcium ions. This chain is Membrane-associated phosphatidylinositol transfer protein 2 (Pitpnm2), found in Mus musculus (Mouse).